Consider the following 39-residue polypeptide: Conotoxin ArMSGL-013 (39 aa).

The propeptide occupies 1–5 (RRSLT). 3 disulfide bridges follow: C12-C24, C16-C33, and C23-C37. W38 carries the tryptophan amide modification.

The protein belongs to the conotoxin O3 superfamily. As to expression, expressed by the venom duct.

It is found in the secreted. This is Conotoxin ArMSGL-013 from Conus arenatus (Sand-dusted cone).